Here is a 162-residue protein sequence, read N- to C-terminus: Regulator of ribonuclease activity A (162 aa).

It belongs to the RraA family. In terms of assembly, homotrimer. Binds to both RNA-binding sites in the C-terminal region of Rne and to RhlB.

Its subcellular location is the cytoplasm. Its function is as follows. Globally modulates RNA abundance by binding to RNase E (Rne) and regulating its endonucleolytic activity. Can modulate Rne action in a substrate-dependent manner by altering the composition of the degradosome. Modulates RNA-binding and helicase activities of the degradosome. In Haemophilus influenzae (strain ATCC 51907 / DSM 11121 / KW20 / Rd), this protein is Regulator of ribonuclease activity A.